The chain runs to 236 residues: MTRRYWNINLEEMMEAGVHFGHGIKKWNPRMAPYIYANRKGIHITNLTKTARFLAEACDLVFDAASRGRQFLIVGTKKQAAALVARAAIKARCHYVNKKWLGGMLTNWSTTETRLHQFRDLRTEQKTGRLNRLPKRDAAILKRQLSHLQTYLGGIKYMTGLPDIVIILDQQEEYTALRECITLGIPTICLIDTDCDPDLADLPIPANDDAMASIRLILNKLVFAICEGRSSSIRNP.

Belongs to the universal ribosomal protein uS2 family.

Its subcellular location is the plastid. It is found in the chloroplast. In Oenothera parviflora (Small-flowered evening primrose), this protein is Small ribosomal subunit protein uS2c (rps2).